A 61-amino-acid chain; its full sequence is Probable tautomerase SMU_1087 (61 aa).

Pro-2 serves as the catalytic Proton acceptor; via imino nitrogen.

It belongs to the 4-oxalocrotonate tautomerase family.

This is Probable tautomerase SMU_1087 from Streptococcus mutans serotype c (strain ATCC 700610 / UA159).